A 488-amino-acid chain; its full sequence is uncharacterized protein (488 aa).

Its subcellular location is the cytoplasm. It localises to the nucleus. This is an uncharacterized protein from Schizosaccharomyces pombe (strain 972 / ATCC 24843) (Fission yeast).